The primary structure comprises 211 residues: Large ribosomal subunit protein eL13 (211 aa).

At lysine 16 the chain carries N6-acetyllysine. A phosphoserine mark is found at serine 52, serine 77, and serine 106. Residues lysine 123 and lysine 145 each participate in a glycyl lysine isopeptide (Lys-Gly) (interchain with G-Cter in SUMO2) cross-link. A Glycyl lysine isopeptide (Lys-Gly) (interchain with G-Cter in SUMO1); alternate cross-link involves residue lysine 174. Residues lysine 174 and lysine 177 each participate in a glycyl lysine isopeptide (Lys-Gly) (interchain with G-Cter in SUMO2); alternate cross-link. N6-acetyllysine; alternate is present on lysine 177.

Belongs to the eukaryotic ribosomal protein eL13 family. Component of the 60S large ribosomal subunit (LSU).

It localises to the cytoplasm. In terms of biological role, component of the ribosome, a large ribonucleoprotein complex responsible for the synthesis of proteins in the cell. The small ribosomal subunit (SSU) binds messenger RNAs (mRNAs) and translates the encoded message by selecting cognate aminoacyl-transfer RNA (tRNA) molecules. The large subunit (LSU) contains the ribosomal catalytic site termed the peptidyl transferase center (PTC), which catalyzes the formation of peptide bonds, thereby polymerizing the amino acids delivered by tRNAs into a polypeptide chain. The nascent polypeptides leave the ribosome through a tunnel in the LSU and interact with protein factors that function in enzymatic processing, targeting, and the membrane insertion of nascent chains at the exit of the ribosomal tunnel. As part of the LSU, it is probably required for its formation and the maturation of rRNAs. Plays a role in bone development. In Rattus norvegicus (Rat), this protein is Large ribosomal subunit protein eL13 (Rpl13).